A 288-amino-acid chain; its full sequence is Ribosomal RNA small subunit methyltransferase A (288 aa).

S-adenosyl-L-methionine contacts are provided by N18, L20, G45, E66, D91, and N118.

Belongs to the class I-like SAM-binding methyltransferase superfamily. rRNA adenine N(6)-methyltransferase family. RsmA subfamily.

The protein localises to the cytoplasm. The catalysed reaction is adenosine(1518)/adenosine(1519) in 16S rRNA + 4 S-adenosyl-L-methionine = N(6)-dimethyladenosine(1518)/N(6)-dimethyladenosine(1519) in 16S rRNA + 4 S-adenosyl-L-homocysteine + 4 H(+). In terms of biological role, specifically dimethylates two adjacent adenosines (A1518 and A1519) in the loop of a conserved hairpin near the 3'-end of 16S rRNA in the 30S particle. May play a critical role in biogenesis of 30S subunits. The sequence is that of Ribosomal RNA small subunit methyltransferase A from Pasteurella multocida (strain Pm70).